The chain runs to 548 residues: MTEITVNGMTCTSCATHVKDALEKIPGVNAAVVSYPESRAQVMADTAVSHNQLLAAIAALGYQGSIRVGDFKDEPKIRDALEGAGLHIAIIGSGGAAMAAALKAVEQGATVTLIERGTIGGTCVNIGCVPSKIMIRAAHIAHLRRESPFDGGIAATVPAIDRSKLLAQQQARVDELRHAKYEGILDGNPAITVLHGEARFKDDQSLVVRLNEGGEREVTFDRCLVATGASPAVPPIPGLKESPYWTSTEALVSDTIPARLAVIGSSVVALELAQAFARLGSQVTILARSTLFFREDPAIGEAVTAAFRAEGIEVLEHTQASQVAHVNGEFVLTTGHGELRADKLLVATGRAPNTRSLALDAPGVTVNAQGAIVIDQGMRTSNPNIYAAGDCTDQPQFVYVAAAAGTRAAINMTGGDRALNLTAMPAVVFTDPQVATVGYSEAEAHHDGIETDSRTLTLDNVPRALANFDTRGFIKLVIEEGSGRLIGVQAVAPEAGELIQTAVLAIRNRMTVQELADQLFPYLTMVEGLKLAAQTFNKDVKQLSCCAG.

Positions 1 to 65 constitute an HMA domain; it reads MTEITVNGMT…AIAALGYQGS (65 aa). A metal cation contacts are provided by Cys11 and Cys14. Residues Ala97, Gly117, and Thr122 each coordinate FAD. Cysteines 123 and 128 form a disulfide. FAD is bound by residues Lys132, Ala198, Asp390, and Val398. Residues Cys545 and Cys546 each coordinate Hg(2+).

It belongs to the class-I pyridine nucleotide-disulfide oxidoreductase family. Homodimer. The cofactor is FAD.

It carries out the reaction Hg + NADP(+) + H(+) = Hg(2+) + NADPH. Resistance to Hg(2+) in bacteria appears to be governed by a specialized system which includes mercuric reductase. MerA protein is responsible for volatilizing mercury as Hg(0). In Pseudomonas fluorescens, this protein is Mercuric reductase (merA).